The primary structure comprises 299 residues: GTPase Era (299 aa).

The Era-type G domain maps to 4 to 171 (KSGFVAILGR…VDILSENLDE (168 aa)). Residues 12–19 (GRPNVGKS) are G1. GTP is bound at residue 12-19 (GRPNVGKS). A G2 region spans residues 38 to 42 (QTTRN). The interval 59–62 (DTPG) is G3. Residues 59-63 (DTPGI) and 121-124 (NKID) each bind GTP. The tract at residues 121–124 (NKID) is G4. The G5 stretch occupies residues 150 to 152 (ISA). Residues 202–280 (TREEIPHSVA…FLETWVKVKK (79 aa)) enclose the KH type-2 domain.

This sequence belongs to the TRAFAC class TrmE-Era-EngA-EngB-Septin-like GTPase superfamily. Era GTPase family. Monomer.

Its subcellular location is the cytoplasm. It localises to the cell membrane. Its function is as follows. An essential GTPase that binds both GDP and GTP, with rapid nucleotide exchange. Plays a role in 16S rRNA processing and 30S ribosomal subunit biogenesis and possibly also in cell cycle regulation and energy metabolism. This chain is GTPase Era, found in Streptococcus pneumoniae (strain Hungary19A-6).